Here is a 93-residue protein sequence, read N- to C-terminus: Small ribosomal subunit protein uS19 (93 aa).

Residues 73 to 93 (EFSPTRTFRGHVKDDRKSKRR) form a disordered region. The span at 83-93 (HVKDDRKSKRR) shows a compositional bias: basic and acidic residues.

The protein belongs to the universal ribosomal protein uS19 family.

Functionally, protein S19 forms a complex with S13 that binds strongly to the 16S ribosomal RNA. The sequence is that of Small ribosomal subunit protein uS19 from Streptomyces coelicolor (strain ATCC BAA-471 / A3(2) / M145).